A 1467-amino-acid polypeptide reads, in one-letter code: Gag-Pol polyprotein (1467 aa).

A lipid anchor (N-myristoyl glycine; by host) is attached at glycine 2. The Nuclear export signal signature appears at 16-22 (FEHIRLR). Residues 26–32 (KKKYQIK) carry the Nuclear localization signal motif. The interval 116 to 144 (NAERNTTETSSGQKKNDKGVTVPPGGSQN) is disordered. CCHC-type zinc fingers lie at residues 402-419 (VKCY…QCPE) and 423-440 (MRCL…DCRG). The Peptidase A2 domain occupies 535–606 (IKALLDTGAD…TPINIIGRNL (72 aa)). The active-site For protease activity; shared with dimeric partner is aspartate 540. A Reverse transcriptase domain is found at 662 to 852 (EGKISRVGGE…PPYEWMGYKL (191 aa)). Residues aspartate 728, aspartate 803, and aspartate 804 each contribute to the Mg(2+) site. Residues 845 to 853 (YEWMGYKLW) are RT 'primer grip'. The short motif at 1015-1031 (WEQWWADYWQVSWIPEW) is the Tryptophan repeat motif element. One can recognise an RNase H type-1 domain in the interval 1050-1173 (PIPKEDVYYV…IDKLVSKGIR (124 aa)). Mg(2+) is bound by residues aspartate 1114 and aspartate 1165. The Integrase-type zinc-finger motif lies at 1179–1220 (EKIEEAQEKHERYHNNWKNLADTYGLPQIVAKEIVAMCPKCQ). Zn(2+) is bound by residues histidine 1188, histidine 1192, cysteine 1216, and cysteine 1219. The Integrase catalytic domain occupies 1230-1380 (VDASPGTWQM…TSAERLINII (151 aa)). Residues aspartate 1240 and aspartate 1292 each contribute to the Mg(2+) site. Residues 1399–1446 (FRVYYREGRDPVWKGPAQLIWKGEGAVVLKDGSDLKVVPRRKAKIIKD) constitute a DNA-binding region (integrase-type). The disordered stretch occupies residues 1447–1467 (YEPKQRVGNEGDVEGTRGSDN).

Homotrimer. Interacts with gp41 (via C-terminus). In terms of assembly, homodimer. The active site consists of two apposed aspartic acid residues. As to quaternary structure, heterodimer of p66 RT and p51 RT (RT p66/p51). Heterodimerization of RT is essential for DNA polymerase activity. Despite the sequence identities, p66 RT and p51 RT have distinct folding. Homotetramer; may further associate as a homohexadecamer. Requires Mg(2+) as cofactor. In terms of processing, specific enzymatic cleavages by the viral protease yield mature proteins. The protease is released by autocatalytic cleavage. The polyprotein is cleaved during and after budding, this process is termed maturation. Proteolytic cleavage of p66 RT removes the RNase H domain to yield the p51 RT subunit. Post-translationally, capsid protein p24 is phosphorylated.

It is found in the virion. The protein resides in the host nucleus. Its subcellular location is the host cytoplasm. It localises to the host cell membrane. It carries out the reaction Specific for a P1 residue that is hydrophobic, and P1' variable, but often Pro.. The catalysed reaction is Endohydrolysis of RNA in RNA/DNA hybrids. Three different cleavage modes: 1. sequence-specific internal cleavage of RNA. Human immunodeficiency virus type 1 and Moloney murine leukemia virus enzymes prefer to cleave the RNA strand one nucleotide away from the RNA-DNA junction. 2. RNA 5'-end directed cleavage 13-19 nucleotides from the RNA end. 3. DNA 3'-end directed cleavage 15-20 nucleotides away from the primer terminus.. It catalyses the reaction 3'-end directed exonucleolytic cleavage of viral RNA-DNA hybrid.. The enzyme catalyses DNA(n) + a 2'-deoxyribonucleoside 5'-triphosphate = DNA(n+1) + diphosphate. Its activity is regulated as follows. The viral protease is inhibited by many synthetic protease inhibitors (PIs), such as amprenavir, atazanavir, indinavir, loprinavir, nelfinavir, ritonavir and saquinavir. RT can be inhibited either by nucleoside RT inhibitors (NRTIs) or by non nucleoside RT inhibitors (NNRTIs). NRTIs act as chain terminators, whereas NNRTIs inhibit DNA polymerization by binding a small hydrophobic pocket near the RT active site and inducing an allosteric change in this region. Classical NRTIs are abacavir, adefovir (PMEA), didanosine (ddI), lamivudine (3TC), stavudine (d4T), tenofovir (PMPA), zalcitabine (ddC), and zidovudine (AZT). Classical NNRTIs are atevirdine (BHAP U-87201E), delavirdine, efavirenz (DMP-266), emivirine (I-EBU), and nevirapine (BI-RG-587). The tritherapies used as a basic effective treatment of AIDS associate two NRTIs and one NNRTI. Use of protease inhibitors in tritherapy regimens permit more ambitious therapeutic strategies. Its function is as follows. Gag-Pol polyprotein and Gag polyprotein may regulate their own translation, by the binding genomic RNA in the 5'-UTR. At low concentration, Gag-Pol and Gag would promote translation, whereas at high concentration, the polyproteins encapsidate genomic RNA and then shut off translation. Functionally, matrix protein p17 has two main functions: in infected cell, it targets Gag and Gag-pol polyproteins to the plasma membrane via a multipartite membrane-binding signal, that includes its myristointegration complex. The myristoylation signal and the NLS exert conflicting influences its subcellular localization. The key regulation of these motifs might be phosphorylation of a portion of MA molecules on the C-terminal tyrosine at the time of virus maturation, by virion-associated cellular tyrosine kinase. Implicated in the release from host cell mediated by Vpu. In terms of biological role, capsid protein p24 forms the conical core that encapsulates the genomic RNA-nucleocapsid complex in the virion. The core is constituted by capsid protein hexamer subunits. The core is disassembled soon after virion entry. Interaction with host PPIA/CYPA protects the virus from restriction by host TRIM5-alpha and from an unknown antiviral activity in host cells. This capsid restriction by TRIM5 is one of the factors which restricts SIV to the simian species. Nucleocapsid protein p7 encapsulates and protects viral dimeric unspliced (genomic) RNA. Binds these RNAs through its zinc fingers. Facilitates rearangement of nucleic acid secondary structure during retrotranscription of genomic RNA. This capability is referred to as nucleic acid chaperone activity. Its function is as follows. The aspartyl protease mediates proteolytic cleavages of Gag and Gag-Pol polyproteins during or shortly after the release of the virion from the plasma membrane. Cleavages take place as an ordered, step-wise cascade to yield mature proteins. This process is called maturation. Displays maximal activity during the budding process just prior to particle release from the cell. Also cleaves Nef and Vif, probably concomitantly with viral structural proteins on maturation of virus particles. Hydrolyzes host EIF4GI and PABP1 in order to shut off the capped cellular mRNA translation. The resulting inhibition of cellular protein synthesis serves to ensure maximal viral gene expression and to evade host immune response. Functionally, reverse transcriptase/ribonuclease H (RT) is a multifunctional enzyme that converts the viral dimeric RNA genome into dsDNA in the cytoplasm, shortly after virus entry into the cell. This enzyme displays a DNA polymerase activity that can copy either DNA or RNA templates, and a ribonuclease H (RNase H) activity that cleaves the RNA strand of RNA-DNA heteroduplexes in a partially processive 3' to 5' endonucleasic mode. Conversion of viral genomic RNA into dsDNA requires many steps. A tRNA binds to the primer-binding site (PBS) situated at the 5'-end of the viral RNA. RT uses the 3' end of the tRNA primer to perform a short round of RNA-dependent minus-strand DNA synthesis. The reading proceeds through the U5 region and ends after the repeated (R) region which is present at both ends of viral RNA. The portion of the RNA-DNA heteroduplex is digested by the RNase H, resulting in a ssDNA product attached to the tRNA primer. This ssDNA/tRNA hybridizes with the identical R region situated at the 3' end of viral RNA. This template exchange, known as minus-strand DNA strong stop transfer, can be either intra- or intermolecular. RT uses the 3' end of this newly synthesized short ssDNA to perform the RNA-dependent minus-strand DNA synthesis of the whole template. RNase H digests the RNA template except for two polypurine tracts (PPTs) situated at the 5'-end and near the center of the genome. It is not clear if both polymerase and RNase H activities are simultaneous. RNase H can probably proceed both in a polymerase-dependent (RNA cut into small fragments by the same RT performing DNA synthesis) and a polymerase-independent mode (cleavage of remaining RNA fragments by free RTs). Secondly, RT performs DNA-directed plus-strand DNA synthesis using the PPTs that have not been removed by RNase H as primers. PPTs and tRNA primers are then removed by RNase H. The 3' and 5' ssDNA PBS regions hybridize to form a circular dsDNA intermediate. Strand displacement synthesis by RT to the PBS and PPT ends produces a blunt ended, linear dsDNA copy of the viral genome that includes long terminal repeats (LTRs) at both ends. In terms of biological role, integrase catalyzes viral DNA integration into the host chromosome, by performing a series of DNA cutting and joining reactions. This enzyme activity takes place after virion entry into a cell and reverse transcription of the RNA genome in dsDNA. The first step in the integration process is 3' processing. This step requires a complex comprising the viral genome, matrix protein, Vpr and integrase. This complex is called the pre-integration complex (PIC). The integrase protein removes 2 nucleotides from each 3' end of the viral DNA, leaving recessed CA OH's at the 3' ends. In the second step, the PIC enters cell nucleus. This process is mediated through integrase and Vpr proteins, and allows the virus to infect a non dividing cell. This ability to enter the nucleus is specific of lentiviruses, other retroviruses cannot and rely on cell division to access cell chromosomes. In the third step, termed strand transfer, the integrase protein joins the previously processed 3' ends to the 5' ends of strands of target cellular DNA at the site of integration. The 5'-ends are produced by integrase-catalyzed staggered cuts, 5 bp apart. A Y-shaped, gapped, recombination intermediate results, with the 5'-ends of the viral DNA strands and the 3' ends of target DNA strands remaining unjoined, flanking a gap of 5 bp. The last step is viral DNA integration into host chromosome. This involves host DNA repair synthesis in which the 5 bp gaps between the unjoined strands are filled in and then ligated. Since this process occurs at both cuts flanking the SIV genome, a 5 bp duplication of host DNA is produced at the ends of SIV integration. Alternatively, Integrase may catalyze the excision of viral DNA just after strand transfer, this is termed disintegration. The sequence is that of Gag-Pol polyprotein (gag-pol) from Cercopithecidae (Old World monkeys).